A 570-amino-acid chain; its full sequence is Proline--tRNA ligase (570 aa).

The protein belongs to the class-II aminoacyl-tRNA synthetase family. ProS type 1 subfamily. Homodimer.

It localises to the cytoplasm. The catalysed reaction is tRNA(Pro) + L-proline + ATP = L-prolyl-tRNA(Pro) + AMP + diphosphate. Catalyzes the attachment of proline to tRNA(Pro) in a two-step reaction: proline is first activated by ATP to form Pro-AMP and then transferred to the acceptor end of tRNA(Pro). As ProRS can inadvertently accommodate and process non-cognate amino acids such as alanine and cysteine, to avoid such errors it has two additional distinct editing activities against alanine. One activity is designated as 'pretransfer' editing and involves the tRNA(Pro)-independent hydrolysis of activated Ala-AMP. The other activity is designated 'posttransfer' editing and involves deacylation of mischarged Ala-tRNA(Pro). The misacylated Cys-tRNA(Pro) is not edited by ProRS. The protein is Proline--tRNA ligase of Shewanella sp. (strain ANA-3).